The primary structure comprises 260 residues: Proteasome subunit alpha (260 aa).

Belongs to the peptidase T1A family. As to quaternary structure, the 20S proteasome core is composed of 14 alpha and 14 beta subunits that assemble into four stacked heptameric rings, resulting in a barrel-shaped structure. The two inner rings, each composed of seven catalytic beta subunits, are sandwiched by two outer rings, each composed of seven alpha subunits. The catalytic chamber with the active sites is on the inside of the barrel. Has a gated structure, the ends of the cylinder being occluded by the N-termini of the alpha-subunits. Is capped at one or both ends by the proteasome regulatory ATPase, PAN.

It is found in the cytoplasm. With respect to regulation, the formation of the proteasomal ATPase PAN-20S proteasome complex, via the docking of the C-termini of PAN into the intersubunit pockets in the alpha-rings, triggers opening of the gate for substrate entry. Interconversion between the open-gate and close-gate conformations leads to a dynamic regulation of the 20S proteasome proteolysis activity. Functionally, component of the proteasome core, a large protease complex with broad specificity involved in protein degradation. In Thermococcus gammatolerans (strain DSM 15229 / JCM 11827 / EJ3), this protein is Proteasome subunit alpha.